Reading from the N-terminus, the 189-residue chain is Probable UbiX-like flavin prenyltransferase (189 aa).

Residues 9 to 11 (GAS), Ser36, 87 to 90 (SMKT), and Arg122 each bind FMN.

This sequence belongs to the UbiX/PAD1 family. YclB subfamily. In terms of assembly, homododecamer.

The enzyme catalyses dimethylallyl phosphate + FMNH2 = prenylated FMNH2 + phosphate. In terms of biological role, involved in the non-oxidative decarboxylation and detoxification of phenolic derivatives under anaerobic conditions. Flavin prenyltransferase that catalyzes the synthesis of the prenylated FMN cofactor (prenyl-FMN) for phenolic acid decarboxylase. In Sedimentibacter hydroxybenzoicus (Clostridium hydroxybenzoicum), this protein is Probable UbiX-like flavin prenyltransferase.